A 795-amino-acid polypeptide reads, in one-letter code: Phenylalanine--tRNA ligase beta subunit (795 aa).

The tRNA-binding domain occupies 39–148 (AGDFSGVVVG…QNAPVGTNLR (110 aa)). Residues 401–476 (PKLNQVSLRR…RIYGYNSIPN (76 aa)) enclose the B5 domain. The Mg(2+) site is built by Asp454, Asp460, Glu463, and Glu464. In terms of domain architecture, FDX-ACB spans 701–794 (SRFPANRRDL…LKQRFNAYLR (94 aa)).

The protein belongs to the phenylalanyl-tRNA synthetase beta subunit family. Type 1 subfamily. In terms of assembly, tetramer of two alpha and two beta subunits. It depends on Mg(2+) as a cofactor.

It is found in the cytoplasm. It carries out the reaction tRNA(Phe) + L-phenylalanine + ATP = L-phenylalanyl-tRNA(Phe) + AMP + diphosphate + H(+). This chain is Phenylalanine--tRNA ligase beta subunit (pheT), found in Pasteurella multocida (strain Pm70).